A 50-amino-acid chain; its full sequence is Large ribosomal subunit protein bL33 (50 aa).

The protein belongs to the bacterial ribosomal protein bL33 family.

The chain is Large ribosomal subunit protein bL33 from Solibacter usitatus (strain Ellin6076).